A 249-amino-acid chain; its full sequence is MAGHSQFKNIMHRKGRQDAVKSKMFSKLAREITVAAKAGLPDPAMNPRLRLAVQNARAQSMPKDNIERAIKKAQGNDAETYEEIRYEGYAPGGVAVIVEALTDNRNRTASNVRAAFTKAGGALGETGSVSFMFDRVGEIVYPASAGDADKVMEAAIEAGAEDVQSDENGHVIICAFEDIGEVTSALEEALGEAESVKTVWRPQTSTPVDEERAQSILKLIAVLEDDDDVQNVYANFEVDDATMAKLSAA.

The protein belongs to the TACO1 family.

Its subcellular location is the cytoplasm. The chain is Probable transcriptional regulatory protein Meso_3192 from Chelativorans sp. (strain BNC1).